The sequence spans 807 residues: Glycerol-3-phosphate acyltransferase (807 aa).

The HXXXXD motif motif lies at 308–313 (CHRSHM).

It belongs to the GPAT/DAPAT family.

It localises to the cell inner membrane. It catalyses the reaction sn-glycerol 3-phosphate + an acyl-CoA = a 1-acyl-sn-glycero-3-phosphate + CoA. It participates in phospholipid metabolism; CDP-diacylglycerol biosynthesis; CDP-diacylglycerol from sn-glycerol 3-phosphate: step 1/3. The sequence is that of Glycerol-3-phosphate acyltransferase from Shewanella sp. (strain W3-18-1).